A 384-amino-acid chain; its full sequence is Dual-specificity RNA methyltransferase RlmN (384 aa).

Catalysis depends on Glu105, which acts as the Proton acceptor. The Radical SAM core domain maps to 111–350 (EVDRATLCVS…TIVRKTRGDD (240 aa)). Residues Cys118 and Cys355 are joined by a disulfide bond. [4Fe-4S] cluster is bound by residues Cys125, Cys129, and Cys132. S-adenosyl-L-methionine contacts are provided by residues 179-180 (GE), Ser211, 233-235 (SLH), and Asn312. Cys355 functions as the S-methylcysteine intermediate in the catalytic mechanism.

It belongs to the radical SAM superfamily. RlmN family. It depends on [4Fe-4S] cluster as a cofactor.

It localises to the cytoplasm. It carries out the reaction adenosine(2503) in 23S rRNA + 2 reduced [2Fe-2S]-[ferredoxin] + 2 S-adenosyl-L-methionine = 2-methyladenosine(2503) in 23S rRNA + 5'-deoxyadenosine + L-methionine + 2 oxidized [2Fe-2S]-[ferredoxin] + S-adenosyl-L-homocysteine. The enzyme catalyses adenosine(37) in tRNA + 2 reduced [2Fe-2S]-[ferredoxin] + 2 S-adenosyl-L-methionine = 2-methyladenosine(37) in tRNA + 5'-deoxyadenosine + L-methionine + 2 oxidized [2Fe-2S]-[ferredoxin] + S-adenosyl-L-homocysteine. Functionally, specifically methylates position 2 of adenine 2503 in 23S rRNA and position 2 of adenine 37 in tRNAs. m2A2503 modification seems to play a crucial role in the proofreading step occurring at the peptidyl transferase center and thus would serve to optimize ribosomal fidelity. The sequence is that of Dual-specificity RNA methyltransferase RlmN from Escherichia coli O9:H4 (strain HS).